The chain runs to 160 residues: Cytochrome b6-f complex subunit 4 (160 aa).

3 helical membrane-spanning segments follow: residues 36 to 56 (LLYMFPVVILGTIACNVGLAV), 95 to 115 (LLGVLLMAAVPAGLLTVPFIE), and 131 to 151 (TVFLIGTVVAIWLGIGATLPI).

It belongs to the cytochrome b family. PetD subfamily. The 4 large subunits of the cytochrome b6-f complex are cytochrome b6, subunit IV (17 kDa polypeptide, petD), cytochrome f and the Rieske protein, while the 4 small subunits are petG, petL, petM and petN. The complex functions as a dimer.

It localises to the plastid. The protein resides in the chloroplast thylakoid membrane. Component of the cytochrome b6-f complex, which mediates electron transfer between photosystem II (PSII) and photosystem I (PSI), cyclic electron flow around PSI, and state transitions. This Coleochaete orbicularis (Charophycean green alga) protein is Cytochrome b6-f complex subunit 4.